The sequence spans 93 residues: Early nodulin-36B (93 aa).

In Glycine max (Soybean), this protein is Early nodulin-36B.